Here is a 136-residue protein sequence, read N- to C-terminus: Large ribosomal subunit protein uL16 (136 aa).

Belongs to the universal ribosomal protein uL16 family. As to quaternary structure, part of the 50S ribosomal subunit.

Binds 23S rRNA and is also seen to make contacts with the A and possibly P site tRNAs. The protein is Large ribosomal subunit protein uL16 of Shewanella woodyi (strain ATCC 51908 / MS32).